We begin with the raw amino-acid sequence, 362 residues long: Outer membrane porin F (362 aa).

The first 22 residues, 1 to 22, serve as a signal peptide directing secretion; the sequence is MMKRNILAVIVPALLVAGTANA. A beta stranded transmembrane segment spans residues 23–28; it reads AEIYNK. A topological domain (periplasmic) is located at residue Asp29. A beta stranded transmembrane segment spans residues 30 to 45; it reads GNKVDLYGKAVGLHYF. The Extracellular portion of the chain corresponds to 46–60; sequence SKGNGENSYGGNGDM. Residues 61–73 traverse the membrane as a beta stranded segment; the sequence is TYARLGFKGETQI. Residues 74–75 lie on the Periplasmic side of the membrane; sequence NS. A beta stranded membrane pass occupies residues 76-88; it reads DLTGYGQWEYNFQ. Topologically, residues 89–104 are extracellular; it reads GNNSEGADAQTGNKTR. Residues 105 to 113 form a beta stranded membrane-spanning segment; the sequence is LAFAGLKYA. The Periplasmic segment spans residues 114 to 115; that stretch reads DV. Residues 116-122 traverse the membrane as a beta stranded segment; sequence GSFDYGR. Over 123–156 the chain is Extracellular; that stretch reads NYGVVYDALGYTDMLPEFGGDTAYSDDFFVGRVG. The beta stranded transmembrane segment at 157–163 threads the bilayer; it reads GVATYRN. The Periplasmic segment spans residues 164–171; sequence SNFFGLVD. The chain crosses the membrane as a beta stranded span at residues 172-181; that stretch reads GLNFAVQYLG. Residues 182–193 lie on the Extracellular side of the membrane; it reads KNERDTARRSNG. Residues 194–204 traverse the membrane as a beta stranded segment; it reads DGVGGSISYEY. Residue Glu205 is a topological domain, periplasmic. The chain crosses the membrane as a beta stranded span at residues 206–217; it reads GFGIVGAYGAAD. The Extracellular segment spans residues 218–232; that stretch reads RTNLQEAQPLGNGKK. A beta stranded membrane pass occupies residues 233 to 244; it reads AEQWATGLKYDA. Residue Asn245 is a topological domain, periplasmic. A beta stranded transmembrane segment spans residues 246-257; sequence NIYLAANYGETR. Residues 258–274 lie on the Extracellular side of the membrane; it reads NATPITNKFTNTSGFAN. A beta stranded membrane pass occupies residues 275–287; it reads KTQDVLLVAQYQF. Residues 288–289 lie on the Periplasmic side of the membrane; that stretch reads DF. Residues 290–303 traverse the membrane as a beta stranded segment; it reads GLRPSIAYTKSKAK. Residues 304–313 are Extracellular-facing; that stretch reads DVEGIGDVDL. A beta stranded membrane pass occupies residues 314–325; the sequence is VNYFEVGATYYF. At 326 to 327 the chain is on the periplasmic side; that stretch reads NK. A beta stranded membrane pass occupies residues 328 to 337; sequence NMSTYVDYII. Over 338 to 352 the chain is Extracellular; sequence NQIDSDNKLGVGSDD. The beta stranded transmembrane segment at 353 to 362 threads the bilayer; it reads TVAVGIVYQF.

This sequence belongs to the Gram-negative porin family. As to quaternary structure, homotrimer. Forms mixed heterotrimers with OmpC and with PhoE; other mixed heterotrimers are also probable. In terms of assembly, (Microbial infection) Trimeric complexes with colicin E3, BtuB and OmpF can be cross-linked and immunoprecipitated.

It is found in the cell outer membrane. Its function is as follows. Forms pores that allow passive diffusion of small molecules across the outer membrane. In terms of biological role, (Microbial infection) It is also a receptor for the bacteriophage T2. Is the major receptor for colicin E5. (Microbial infection) Probably translocates colicin E3 (and other A-type colicins) across the outer membrane. Functionally, (Microbial infection) A mixed OmpC-OmpF heterotrimer is the outer membrane receptor for toxin CdiA-EC536 (ECL_04451); polymorphisms in extracellular loops 4 and 5 of OmpC confer susceptibility to CdiA-EC536-mediated toxicity. The polypeptide is Outer membrane porin F (ompF) (Escherichia coli (strain K12)).